Here is a 113-residue protein sequence, read N- to C-terminus: MTTPSVSAISAYRQLLRATRIAFKDDYRVLLAARTEARKQFDQHKRTAVDTPMQIQHALETASILRHNIVQGARDAEKEDAKWELRIHDDIERGDNDSVKIGGKKVKIEKACS.

The protein belongs to the complex I LYR family. MZM1 subfamily. In terms of assembly, interacts with RIP1.

It localises to the mitochondrion matrix. In terms of biological role, assembly factor required for Rieske Fe-S protein RIP1 incorporation into the cytochrome b-c1 (CIII) complex. Functions as a chaperone, binding to this subunit within the mitochondrial matrix and stabilizing it prior to its translocation and insertion into the late CIII dimeric intermediate within the mitochondrial inner membrane. Modulates the mitochondrial matrix zinc pool. In Talaromyces stipitatus (strain ATCC 10500 / CBS 375.48 / QM 6759 / NRRL 1006) (Penicillium stipitatum), this protein is Mitochondrial zinc maintenance protein 1, mitochondrial (MZM1).